The primary structure comprises 133 residues: ATP synthase epsilon chain (133 aa).

Belongs to the ATPase epsilon chain family. F-type ATPases have 2 components, CF(1) - the catalytic core - and CF(0) - the membrane proton channel. CF(1) has five subunits: alpha(3), beta(3), gamma(1), delta(1), epsilon(1). CF(0) has three main subunits: a, b and c.

The protein resides in the cell membrane. Its function is as follows. Produces ATP from ADP in the presence of a proton gradient across the membrane. This chain is ATP synthase epsilon chain, found in Bacillus cereus (strain ATCC 14579 / DSM 31 / CCUG 7414 / JCM 2152 / NBRC 15305 / NCIMB 9373 / NCTC 2599 / NRRL B-3711).